Consider the following 407-residue polypeptide: Obg-like ATPase homolog (407 aa).

One can recognise an OBG-type G domain in the interval 46–301 (LKIGIVGMPN…LTPEEAAQEC (256 aa)). Residues 55–60 (NIGKST) and Met-249 contribute to the ATP site. Residues 322–405 (NLIHYFTASE…EPGDIIFWKI (84 aa)) enclose the TGS domain.

This sequence belongs to the TRAFAC class OBG-HflX-like GTPase superfamily. OBG GTPase family.

Hydrolyzes ATP, and can also hydrolyze GTP with lower efficiency. Has lower affinity for GTP. The protein is Obg-like ATPase homolog of Schizosaccharomyces pombe (strain 972 / ATCC 24843) (Fission yeast).